We begin with the raw amino-acid sequence, 257 residues long: Ribonuclease PH (257 aa).

Residues Arg-88 and Gly-126–Arg-128 contribute to the phosphate site.

Belongs to the RNase PH family. Homohexameric ring arranged as a trimer of dimers.

The enzyme catalyses tRNA(n+1) + phosphate = tRNA(n) + a ribonucleoside 5'-diphosphate. Phosphorolytic 3'-5' exoribonuclease that plays an important role in tRNA 3'-end maturation. Removes nucleotide residues following the 3'-CCA terminus of tRNAs; can also add nucleotides to the ends of RNA molecules by using nucleoside diphosphates as substrates, but this may not be physiologically important. Probably plays a role in initiation of 16S rRNA degradation (leading to ribosome degradation) during starvation. This is Ribonuclease PH from Nocardia farcinica (strain IFM 10152).